Consider the following 143-residue polypeptide: MKCGVFMEVYTQELPLRTSRRVELIDITSMVSGVLESSGIRNGILNVFSRHSTSAIFINENESRLLSDIESMLEGTVPVDASYGHNAIDNNADSHLRAVLLGGSQTVPVINGSMDLGTWQSIFFAELDGPRNRRIRVSVAGKP.

Belongs to the UPF0047 family.

The polypeptide is UPF0047 protein MTH_771 (Methanothermobacter thermautotrophicus (strain ATCC 29096 / DSM 1053 / JCM 10044 / NBRC 100330 / Delta H) (Methanobacterium thermoautotrophicum)).